Consider the following 162-residue polypeptide: Serine-protein kinase RsbW (162 aa).

This sequence belongs to the anti-sigma-factor family.

The enzyme catalyses L-seryl-[protein] + ATP = O-phospho-L-seryl-[protein] + ADP + H(+). The catalysed reaction is L-threonyl-[protein] + ATP = O-phospho-L-threonyl-[protein] + ADP + H(+). In terms of biological role, negative regulator of sigma-B activity. Phosphorylates and inactivates its specific antagonist protein, RsbV. Upon phosphorylation of RsbV, RsbW is released and binds to sigma-B, thereby blocking its ability to form an RNA polymerase holoenzyme (E-sigma-B). The protein is Serine-protein kinase RsbW of Halalkalibacterium halodurans (strain ATCC BAA-125 / DSM 18197 / FERM 7344 / JCM 9153 / C-125) (Bacillus halodurans).